Here is a 432-residue protein sequence, read N- to C-terminus: Adenylosuccinate synthetase (432 aa).

GTP contacts are provided by residues glycine 13–lysine 19 and glycine 41–threonine 43. The active-site Proton acceptor is aspartate 14. Residues aspartate 14 and glycine 41 each coordinate Mg(2+). IMP-binding positions include aspartate 14–lysine 17, asparagine 39–histidine 42, threonine 130, arginine 144, glutamine 225, threonine 240, and arginine 304. Histidine 42 serves as the catalytic Proton donor. Serine 300–arginine 306 provides a ligand contact to substrate. GTP contacts are provided by residues arginine 306, lysine 332–aspartate 334, and serine 416–glycine 418.

This sequence belongs to the adenylosuccinate synthetase family. In terms of assembly, homodimer. Requires Mg(2+) as cofactor.

The protein localises to the cytoplasm. It catalyses the reaction IMP + L-aspartate + GTP = N(6)-(1,2-dicarboxyethyl)-AMP + GDP + phosphate + 2 H(+). It participates in purine metabolism; AMP biosynthesis via de novo pathway; AMP from IMP: step 1/2. Plays an important role in the de novo pathway of purine nucleotide biosynthesis. Catalyzes the first committed step in the biosynthesis of AMP from IMP. This chain is Adenylosuccinate synthetase, found in Nitrosomonas eutropha (strain DSM 101675 / C91 / Nm57).